Consider the following 315-residue polypeptide: MQIKLANPRGFCAGVDRAIEIVNRALEVFGPPIYVRHEVVHNKFVVEDLRNRGAVFVEELDQVPDDVIVIFSAHGVSQAVRQEAAGRGLKVFDATCPLVTKVHIEVAKYSRDGRECILIGHAGHPEVEGTMGQYDASNGGSIYLVEDEKDVAALQVRNPDHLAFVTQTTLSMDDTSRVIDALRERFPNIGGPRKDDICYATQNRQDAVKQLADECDVVLVVGSPNSSNSNRLRELAERMSTPAYLIDGAEDLQRSWFDGAQRIGITAGASAPEVLVRGVIDQLKAWGATGAEELDGREENITFSMPKELRVRSLI.

Cys12 contributes to the [4Fe-4S] cluster binding site. (2E)-4-hydroxy-3-methylbut-2-enyl diphosphate contacts are provided by His41 and His74. Residues His41 and His74 each contribute to the dimethylallyl diphosphate site. Positions 41 and 74 each coordinate isopentenyl diphosphate. Cys96 serves as a coordination point for [4Fe-4S] cluster. (2E)-4-hydroxy-3-methylbut-2-enyl diphosphate is bound at residue His124. His124 lines the dimethylallyl diphosphate pocket. Residue His124 participates in isopentenyl diphosphate binding. Glu126 acts as the Proton donor in catalysis. (2E)-4-hydroxy-3-methylbut-2-enyl diphosphate is bound at residue Thr168. Cys198 contributes to the [4Fe-4S] cluster binding site. Residues Ser226, Ser227, Asn228, and Ser270 each contribute to the (2E)-4-hydroxy-3-methylbut-2-enyl diphosphate site. Dimethylallyl diphosphate is bound by residues Ser226, Ser227, Asn228, and Ser270. The isopentenyl diphosphate site is built by Ser226, Ser227, Asn228, and Ser270.

This sequence belongs to the IspH family. The cofactor is [4Fe-4S] cluster.

It catalyses the reaction isopentenyl diphosphate + 2 oxidized [2Fe-2S]-[ferredoxin] + H2O = (2E)-4-hydroxy-3-methylbut-2-enyl diphosphate + 2 reduced [2Fe-2S]-[ferredoxin] + 2 H(+). The enzyme catalyses dimethylallyl diphosphate + 2 oxidized [2Fe-2S]-[ferredoxin] + H2O = (2E)-4-hydroxy-3-methylbut-2-enyl diphosphate + 2 reduced [2Fe-2S]-[ferredoxin] + 2 H(+). Its pathway is isoprenoid biosynthesis; dimethylallyl diphosphate biosynthesis; dimethylallyl diphosphate from (2E)-4-hydroxy-3-methylbutenyl diphosphate: step 1/1. It functions in the pathway isoprenoid biosynthesis; isopentenyl diphosphate biosynthesis via DXP pathway; isopentenyl diphosphate from 1-deoxy-D-xylulose 5-phosphate: step 6/6. Its function is as follows. Catalyzes the conversion of 1-hydroxy-2-methyl-2-(E)-butenyl 4-diphosphate (HMBPP) into a mixture of isopentenyl diphosphate (IPP) and dimethylallyl diphosphate (DMAPP). Acts in the terminal step of the DOXP/MEP pathway for isoprenoid precursor biosynthesis. In Pseudomonas entomophila (strain L48), this protein is 4-hydroxy-3-methylbut-2-enyl diphosphate reductase.